Reading from the N-terminus, the 942-residue chain is Protein inturned (942 aa).

The interval 1-52 (MASVASCDSRPSSDELPGDPSSQEEDEDYDFEDRVSDSGSYSSASSDYDDLE) is disordered. A compositionally biased stretch (acidic residues) spans 22–31 (SQEEDEDYDF). A compositionally biased stretch (low complexity) spans 37-46 (DSGSYSSASS). In terms of domain architecture, PDZ spans 185–263 (LVGIIHQTKW…PMQVKLTFEN (79 aa)). Ser-670 and Ser-674 each carry phosphoserine. Residues 704-754 (TRKPSPSCSSGGSDNGCEGGEDDGFSPHTTPDAVRKQRESQGSDGLEESGT) form a disordered region.

The protein belongs to the inturned family. As to quaternary structure, component of the CPLANE (ciliogenesis and planar polarity effectors) complex, composed of INTU, FUZ and WDPCP. Interacts with CPLANE1. Interacts with NPHP4 and DAAM1; INTU is mediating the interaction between NPHP4 and DAAM1.

It is found in the cytoplasm. Its subcellular location is the cell surface. The protein resides in the cytoskeleton. The protein localises to the cilium basal body. It localises to the microtubule organizing center. It is found in the centrosome. Its subcellular location is the centriole. In terms of biological role, plays a key role in ciliogenesis and embryonic development. Regulator of cilia formation by controlling the organization of the apical actin cytoskeleton and the positioning of the basal bodies at the apical cell surface, which in turn is essential for the normal orientation of elongating ciliary microtubules. Plays a key role in definition of cell polarity via its role in ciliogenesis but not via conversion extension. Has an indirect effect on hedgehog signaling. Proposed to function as core component of the CPLANE (ciliogenesis and planar polarity effectors) complex involved in the recruitment of peripheral IFT-A proteins to basal bodies. Required for recruitment of CPLANE2 to the mother centriole. Binds phosphatidylinositol 3-phosphate with highest affinity, followed by phosphatidylinositol 4-phosphate and phosphatidylinositol 5-phosphate. In Homo sapiens (Human), this protein is Protein inturned (INTU).